The sequence spans 136 residues: Ig kappa chain V-V region MOPC 21 (136 aa).

The N-terminal stretch at 1–29 is a signal peptide; sequence MHQTSMGIKMESHTLVFISILLCLYGADG. Residues 30–52 are framework-1; that stretch reads NIVMTQSPKSMSMSVGERVTLTC. Residues 53 to 63 are complementarity-determining-1; the sequence is KASENVVTYVS. The tract at residues 64 to 78 is framework-2; the sequence is WYQQKPEQSPKLLIY. The tract at residues 79–85 is complementarity-determining-2; sequence GASNRYT. The interval 86-117 is framework-3; the sequence is GVPDRFTGSGSATDFTLTISSVQAEDLADYHC. The interval 118–126 is complementarity-determining-3; that stretch reads GQGYSYPYT. Residues 127–136 are framework-4; the sequence is FGGGTKLEIK.

In Mus musculus (Mouse), this protein is Ig kappa chain V-V region MOPC 21.